Consider the following 81-residue polypeptide: ATP synthase subunit c (81 aa).

The next 2 helical transmembrane spans lie at Phe-7–Ile-27 and Phe-53–Phe-73.

The protein belongs to the ATPase C chain family. As to quaternary structure, F-type ATPases have 2 components, F(1) - the catalytic core - and F(0) - the membrane proton channel. F(1) has five subunits: alpha(3), beta(3), gamma(1), delta(1), epsilon(1). F(0) has three main subunits: a(1), b(2) and c(10-14). The alpha and beta chains form an alternating ring which encloses part of the gamma chain. F(1) is attached to F(0) by a central stalk formed by the gamma and epsilon chains, while a peripheral stalk is formed by the delta and b chains.

The protein localises to the cell inner membrane. F(1)F(0) ATP synthase produces ATP from ADP in the presence of a proton or sodium gradient. F-type ATPases consist of two structural domains, F(1) containing the extramembraneous catalytic core and F(0) containing the membrane proton channel, linked together by a central stalk and a peripheral stalk. During catalysis, ATP synthesis in the catalytic domain of F(1) is coupled via a rotary mechanism of the central stalk subunits to proton translocation. Functionally, key component of the F(0) channel; it plays a direct role in translocation across the membrane. A homomeric c-ring of between 10-14 subunits forms the central stalk rotor element with the F(1) delta and epsilon subunits. In Azoarcus sp. (strain BH72), this protein is ATP synthase subunit c.